The chain runs to 159 residues: Ribosome-binding factor A (159 aa).

Basic and acidic residues-rich tracts occupy residues 118–128 and 137–146; these read AADDEVAKARE and DPYKEPRVAS. The disordered stretch occupies residues 118–159; it reads AADDEVAKARENAQPAGDADPYKEPRVASDEDEASPDVREAD.

This sequence belongs to the RbfA family. In terms of assembly, monomer. Binds 30S ribosomal subunits, but not 50S ribosomal subunits or 70S ribosomes.

It localises to the cytoplasm. Its function is as follows. One of several proteins that assist in the late maturation steps of the functional core of the 30S ribosomal subunit. Associates with free 30S ribosomal subunits (but not with 30S subunits that are part of 70S ribosomes or polysomes). Required for efficient processing of 16S rRNA. May interact with the 5'-terminal helix region of 16S rRNA. This chain is Ribosome-binding factor A, found in Rhodococcus erythropolis (strain PR4 / NBRC 100887).